Reading from the N-terminus, the 457-residue chain is Bifunctional protein GlmU (457 aa).

The pyrophosphorylase stretch occupies residues 1 to 236 (MDQDACTHSA…DWHFLGVNTP (236 aa)). UDP-N-acetyl-alpha-D-glucosamine contacts are provided by residues 14 to 17 (LAAG), Lys28, Gln79, and 84 to 85 (GT). Asp110 contacts Mg(2+). Residues Gly145, Glu159, Asn176, and Asn234 each coordinate UDP-N-acetyl-alpha-D-glucosamine. Asn234 is a Mg(2+) binding site. Residues 237–257 (KDLSYVESIQQAFIIEKLLQS) form a linker region. An N-acetyltransferase region spans residues 258 to 457 (GVIIHSPESV…GKQKNFSKRK (200 aa)). 2 residues coordinate UDP-N-acetyl-alpha-D-glucosamine: Arg340 and Lys358. The Proton acceptor role is filled by His370. The UDP-N-acetyl-alpha-D-glucosamine site is built by Tyr373 and Asn384. Residues Ala387, 393–394 (NY), Ser412, Ala430, and Arg447 each bind acetyl-CoA.

In the N-terminal section; belongs to the N-acetylglucosamine-1-phosphate uridyltransferase family. The protein in the C-terminal section; belongs to the transferase hexapeptide repeat family. As to quaternary structure, homotrimer. Mg(2+) is required as a cofactor.

The protein resides in the cytoplasm. The catalysed reaction is alpha-D-glucosamine 1-phosphate + acetyl-CoA = N-acetyl-alpha-D-glucosamine 1-phosphate + CoA + H(+). It carries out the reaction N-acetyl-alpha-D-glucosamine 1-phosphate + UTP + H(+) = UDP-N-acetyl-alpha-D-glucosamine + diphosphate. Its pathway is nucleotide-sugar biosynthesis; UDP-N-acetyl-alpha-D-glucosamine biosynthesis; N-acetyl-alpha-D-glucosamine 1-phosphate from alpha-D-glucosamine 6-phosphate (route II): step 2/2. The protein operates within nucleotide-sugar biosynthesis; UDP-N-acetyl-alpha-D-glucosamine biosynthesis; UDP-N-acetyl-alpha-D-glucosamine from N-acetyl-alpha-D-glucosamine 1-phosphate: step 1/1. It functions in the pathway bacterial outer membrane biogenesis; LPS lipid A biosynthesis. In terms of biological role, catalyzes the last two sequential reactions in the de novo biosynthetic pathway for UDP-N-acetylglucosamine (UDP-GlcNAc). The C-terminal domain catalyzes the transfer of acetyl group from acetyl coenzyme A to glucosamine-1-phosphate (GlcN-1-P) to produce N-acetylglucosamine-1-phosphate (GlcNAc-1-P), which is converted into UDP-GlcNAc by the transfer of uridine 5-monophosphate (from uridine 5-triphosphate), a reaction catalyzed by the N-terminal domain. The chain is Bifunctional protein GlmU from Lawsonia intracellularis (strain PHE/MN1-00).